Consider the following 160-residue polypeptide: Major strawberry allergen Fra a 1-2 (160 aa).

This sequence belongs to the BetVI family. As to quaternary structure, monomer. Interacts with AP. In terms of tissue distribution, highly expressed in ripe red fruits. Expressed in roots and white fruits. Expressed at low levels in open flowers.

Involved in the control of flavonoid biosynthesis in fruits, probably by binding directly to natural flavonoids. Binds the natural flavonoid myricetin with affinities in the low micromolar range. The polypeptide is Major strawberry allergen Fra a 1-2 (Fragaria ananassa (Strawberry)).